The following is a 117-amino-acid chain: Crustacean hyperglycemic hormones 3 (117 aa).

Residues 1–24 (MVTPRMLSALSAVLLLVLTASSSA) form the signal peptide. Disulfide bonds link cysteine 50-cysteine 86, cysteine 66-cysteine 82, and cysteine 69-cysteine 95. Valine 115 carries the post-translational modification Valine amide.

Belongs to the arthropod CHH/MIH/GIH/VIH hormone family. As to expression, produced by the medulla terminalis X-organ in the eyestalks and transported to the sinus gland where they are stored and released.

The protein resides in the secreted. Hormone found in the sinus gland of isopods and decapods which controls the blood sugar level. Has a secretagogue action over the amylase released from the midgut gland. May act as a stress hormone and may be involved in the control of molting and reproduction. This is Crustacean hyperglycemic hormones 3 from Penaeus japonicus (Kuruma prawn).